A 76-amino-acid polypeptide reads, in one-letter code: ATP synthase subunit 9, mitochondrial (76 aa).

A run of 2 helical transmembrane segments spans residues 14 to 34 (MATLGLGGAAIGIALVFVALI) and 52 to 72 (ILGFALAEACGLFCLMMSFLL).

Belongs to the ATPase C chain family. F-type ATPases have 2 components, CF(1) - the catalytic core - and CF(0) - the membrane proton channel. CF(1) has five subunits: alpha(3), beta(3), gamma(1), delta(1), epsilon(1). CF(0) has three main subunits: a, b and c.

The protein localises to the mitochondrion membrane. Its function is as follows. Mitochondrial membrane ATP synthase (F(1)F(0) ATP synthase or Complex V) produces ATP from ADP in the presence of a proton gradient across the membrane which is generated by electron transport complexes of the respiratory chain. F-type ATPases consist of two structural domains, F(1) - containing the extramembraneous catalytic core and F(0) - containing the membrane proton channel, linked together by a central stalk and a peripheral stalk. During catalysis, ATP synthesis in the catalytic domain of F(1) is coupled via a rotary mechanism of the central stalk subunits to proton translocation. Part of the complex F(0) domain. A homomeric c-ring of probably 10 subunits is part of the complex rotary element. In Debaryomyces hansenii (strain ATCC 36239 / CBS 767 / BCRC 21394 / JCM 1990 / NBRC 0083 / IGC 2968) (Yeast), this protein is ATP synthase subunit 9, mitochondrial (ATP9).